Here is a 152-residue protein sequence, read N- to C-terminus: UPF0178 protein SAB0630c (152 aa).

This sequence belongs to the UPF0178 family.

The sequence is that of UPF0178 protein SAB0630c from Staphylococcus aureus (strain bovine RF122 / ET3-1).